A 507-amino-acid polypeptide reads, in one-letter code: ATP synthase subunit alpha, chloroplastic (507 aa).

170 to 177 (GDRQTGKT) contacts ATP.

It belongs to the ATPase alpha/beta chains family. F-type ATPases have 2 components, CF(1) - the catalytic core - and CF(0) - the membrane proton channel. CF(1) has five subunits: alpha(3), beta(3), gamma(1), delta(1), epsilon(1). CF(0) has four main subunits: a, b, b' and c.

The protein resides in the plastid. The protein localises to the chloroplast thylakoid membrane. The enzyme catalyses ATP + H2O + 4 H(+)(in) = ADP + phosphate + 5 H(+)(out). Functionally, produces ATP from ADP in the presence of a proton gradient across the membrane. The alpha chain is a regulatory subunit. This chain is ATP synthase subunit alpha, chloroplastic, found in Atropa belladonna (Belladonna).